The chain runs to 245 residues: Proteolipid protein DM alpha (245 aa).

Transmembrane regions (helical) follow at residues 19-35, 71-87, 117-133, and 204-220; these read LIAT…FCGC, IIYG…VLLL, FIFL…GVFA, and LFIA…IALL.

Belongs to the myelin proteolipid protein family. Highly expressed in white matter in myelinating shark brain.

It is found in the membrane. This chain is Proteolipid protein DM alpha, found in Squalus acanthias (Spiny dogfish).